Reading from the N-terminus, the 552-residue chain is ATP synthase subunit alpha, mitochondrial (552 aa).

Residues 1-47 constitute a mitochondrion transit peptide; the sequence is MSIFSARLASSVARNLPKAANQVACKAAYPAASLAARKLHVASTQRS. 211–218 is an ATP binding site; sequence GDRQTGKT.

It belongs to the ATPase alpha/beta chains family. In terms of assembly, F-type ATPases have 2 components, CF(1) - the catalytic core - and CF(0) - the membrane proton channel. CF(1) has five subunits: alpha(3), beta(3), gamma(1), delta(1), epsilon(1). CF(0) has three main subunits: a, b and c.

The protein localises to the mitochondrion inner membrane. Functionally, mitochondrial membrane ATP synthase (F(1)F(0) ATP synthase or Complex V) produces ATP from ADP in the presence of a proton gradient across the membrane which is generated by electron transport complexes of the respiratory chain. F-type ATPases consist of two structural domains, F(1) - containing the extramembraneous catalytic core, and F(0) - containing the membrane proton channel, linked together by a central stalk and a peripheral stalk. During catalysis, ATP synthesis in the catalytic domain of F(1) is coupled via a rotary mechanism of the central stalk subunits to proton translocation. Subunits alpha and beta form the catalytic core in F(1). Rotation of the central stalk against the surrounding alpha(3)beta(3) subunits leads to hydrolysis of ATP in three separate catalytic sites on the beta subunits. Subunit alpha does not bear the catalytic high-affinity ATP-binding sites. This is ATP synthase subunit alpha, mitochondrial (blw) from Drosophila melanogaster (Fruit fly).